The chain runs to 495 residues: Siroheme synthase 2 (495 aa).

The precorrin-2 dehydrogenase /sirohydrochlorin ferrochelatase stretch occupies residues 1–205; that stretch reads MDHYPIFLNL…GREREAEQAM (205 aa). Residues 22-23 and 43-44 contribute to the NAD(+) site; these read ET and PD. Ser130 carries the phosphoserine modification. The uroporphyrinogen-III C-methyltransferase stretch occupies residues 220 to 495; that stretch reads GEVYLVGAGP…HPAPADTEQA (276 aa). S-adenosyl-L-methionine is bound at residue Pro229. The active-site Proton acceptor is Asp252. The active-site Proton donor is the Lys274. Residues 305–307, Ile310, 335–336, Met387, and Ala416 each bind S-adenosyl-L-methionine; these read GGD and TA. A disordered region spans residues 471 to 495; sequence FPEHGCLRGEPRPTRHPAPADTEQA.

This sequence in the N-terminal section; belongs to the precorrin-2 dehydrogenase / sirohydrochlorin ferrochelatase family. It in the C-terminal section; belongs to the precorrin methyltransferase family.

The enzyme catalyses uroporphyrinogen III + 2 S-adenosyl-L-methionine = precorrin-2 + 2 S-adenosyl-L-homocysteine + H(+). It carries out the reaction precorrin-2 + NAD(+) = sirohydrochlorin + NADH + 2 H(+). The catalysed reaction is siroheme + 2 H(+) = sirohydrochlorin + Fe(2+). It participates in cofactor biosynthesis; adenosylcobalamin biosynthesis; precorrin-2 from uroporphyrinogen III: step 1/1. It functions in the pathway cofactor biosynthesis; adenosylcobalamin biosynthesis; sirohydrochlorin from precorrin-2: step 1/1. The protein operates within porphyrin-containing compound metabolism; siroheme biosynthesis; precorrin-2 from uroporphyrinogen III: step 1/1. Its pathway is porphyrin-containing compound metabolism; siroheme biosynthesis; siroheme from sirohydrochlorin: step 1/1. It participates in porphyrin-containing compound metabolism; siroheme biosynthesis; sirohydrochlorin from precorrin-2: step 1/1. In terms of biological role, multifunctional enzyme that catalyzes the SAM-dependent methylations of uroporphyrinogen III at position C-2 and C-7 to form precorrin-2 via precorrin-1. Then it catalyzes the NAD-dependent ring dehydrogenation of precorrin-2 to yield sirohydrochlorin. Finally, it catalyzes the ferrochelation of sirohydrochlorin to yield siroheme. The polypeptide is Siroheme synthase 2 (Halorhodospira halophila (strain DSM 244 / SL1) (Ectothiorhodospira halophila (strain DSM 244 / SL1))).